The chain runs to 2092 residues: Nonribosomal peptide synthetase echPS (2092 aa).

The segment at 13 to 406 (FSQRCCQNPD…GRRDRVTKIR (394 aa)) is adenylation 1. The Carrier 1 domain occupies 524–600 (SGPLTIGQAI…SLIEKSRHET (77 aa)). S561 bears the O-(pantetheine 4'-phosphoryl)serine mark. Positions 596-626 (SRHETEDTPDSSAFATRTPEESSMPTQGPVT) are disordered. Residues 605–624 (DSSAFATRTPEESSMPTQGP) show a composition bias toward polar residues. The segment at 624 to 1017 (PVTPLQKRMV…YTSLLDAFLD (394 aa)) is condensation 1. An adenylation 2 region spans residues 1068–1446 (ASLYPTHVAV…GRKDRQVKVR (379 aa)). Positions 1544–1622 (IKTTHLEKLI…DLVILVAQQQ (79 aa)) constitute a Carrier 2 domain. S1582 bears the O-(pantetheine 4'-phosphoryl)serine mark. The interval 1663–2047 (SQSQSTFNVS…EALLLECFRI (385 aa)) is condensation 2.

Belongs to the NRP synthetase family. The cofactor is pantetheine 4'-phosphate.

The enzyme catalyses L-tryptophan + L-alanine + 2 ATP = cyclo(L-tryptophyl-L-alanyl) + 2 ADP + 2 phosphate + 2 H(+). It functions in the pathway secondary metabolite biosynthesis. It participates in alkaloid biosynthesis. Its function is as follows. Nonribosomal peptide synthetase; part of the gene cluster that mediates the biosynthesis of echinulin family alkaloid. The pathway begins with the biosynthesis of the cyclic dipeptide cyclo-L-Trp-L-Ala (cyclo-TA) by the NRPS echPS via condensation of L-alanine and L-tryptophan. The prenyltransferase echPT1 then catalyzes the first prenylation step, a reverse prenylation reaction at C2, to yield preechinulin. Preechinulin is the substrate of the cytochrome P450 monooxygenase echP450 that catalyzes the formation of the double bond between C10 and C11 to produce neoechulin A. The unique prenyltransferase echPT2 functions as a competitive enzyme with echP450 for preechinulin metabolization and uses preechinulin for effective regiospecific prenylations. Preechinulin is prenylated by echPT2 at C5 or C7. C7-prenylation leads to accumulation of tardioxopiperazine B without further modification by echPT2. In contrast, the C5-prenylated tardioxopiperazine A can be prenylated again by echPT2, predominantly at C7 to form echinulin or less frequently at C4 to give variecolorin L. EchPT2 also accepts neoechilunin A to produce varlecolorin G (prenylation at C5) or isoechinulin A (prenylation at C7). EchPT2 further converts isoechinulin A into dehydroechinulin. Moreover, a yet unidentified enzyme can also convert neoechilunin A into neoechilunin B by introducing a double bond between positions C14 and C17 and thus provides a further substrate to echPT2 for C5 and C7 prenylation. This chain is Nonribosomal peptide synthetase echPS, found in Aspergillus ruber (strain CBS 135680).